A 261-amino-acid polypeptide reads, in one-letter code: Carbonic anhydrase 1 (261 aa).

The segment at 1-31 (MASPDWGYDDKNGPEQWSKLYPIANGNNQSP) is disordered. At Ala2 the chain carries N-acetylalanine. The 258-residue stretch at 4-261 (PDWGYDDKNG…LKGRTVRASF (258 aa)) folds into the Alpha-carbonic anhydrase domain. His65 (proton donor/acceptor) is an active-site residue. Zn(2+)-binding residues include His95, His97, and His120. Residues Thr200 and 200–201 (TH) contribute to the substrate site. Positions 240 to 261 (VPMQHNNRPTQPLKGRTVRASF) are disordered.

It belongs to the alpha-carbonic anhydrase family. The cofactor is Zn(2+).

The protein resides in the cytoplasm. It catalyses the reaction hydrogencarbonate + H(+) = CO2 + H2O. The enzyme catalyses urea = cyanamide + H2O. Inhibited by acetazolamide. Functionally, catalyzes the reversible hydration of carbon dioxide. Can hydrate cyanamide to urea. In Gorilla gorilla gorilla (Western lowland gorilla), this protein is Carbonic anhydrase 1 (CA1).